Consider the following 176-residue polypeptide: Xanthine-guanine phosphoribosyltransferase (176 aa).

5-phospho-alpha-D-ribose 1-diphosphate-binding positions include 51–52 (RG) and 110–118 (DDLVDTGKT). Residue Asp-111 participates in Mg(2+) binding. Residues Asp-114 and Ile-157 each contribute to the guanine site. Positions 114 and 157 each coordinate xanthine. Residues 114–118 (DTGKT) and 156–157 (WI) each bind GMP.

Belongs to the purine/pyrimidine phosphoribosyltransferase family. XGPT subfamily. In terms of assembly, homotetramer. The cofactor is Mg(2+).

The protein localises to the cell inner membrane. It carries out the reaction GMP + diphosphate = guanine + 5-phospho-alpha-D-ribose 1-diphosphate. The catalysed reaction is XMP + diphosphate = xanthine + 5-phospho-alpha-D-ribose 1-diphosphate. The enzyme catalyses IMP + diphosphate = hypoxanthine + 5-phospho-alpha-D-ribose 1-diphosphate. It functions in the pathway purine metabolism; GMP biosynthesis via salvage pathway; GMP from guanine: step 1/1. Its pathway is purine metabolism; XMP biosynthesis via salvage pathway; XMP from xanthine: step 1/1. Purine salvage pathway enzyme that catalyzes the transfer of the ribosyl-5-phosphate group from 5-phospho-alpha-D-ribose 1-diphosphate (PRPP) to the N9 position of the 6-oxopurines guanine and xanthine to form the corresponding ribonucleotides GMP (guanosine 5'-monophosphate) and XMP (xanthosine 5'-monophosphate), with the release of PPi. To a lesser extent, also acts on hypoxanthine. The polypeptide is Xanthine-guanine phosphoribosyltransferase (Bradyrhizobium diazoefficiens (strain JCM 10833 / BCRC 13528 / IAM 13628 / NBRC 14792 / USDA 110)).